We begin with the raw amino-acid sequence, 292 residues long: Probable endonuclease 4 (292 aa).

His71, His111, Glu148, Asp182, His185, His217, Asp230, His232, and Glu262 together coordinate Zn(2+).

Belongs to the AP endonuclease 2 family. The cofactor is Zn(2+).

It catalyses the reaction Endonucleolytic cleavage to 5'-phosphooligonucleotide end-products.. In terms of biological role, endonuclease IV plays a role in DNA repair. It cleaves phosphodiester bonds at apurinic or apyrimidinic (AP) sites, generating a 3'-hydroxyl group and a 5'-terminal sugar phosphate. This chain is Probable endonuclease 4, found in Aster yellows witches'-broom phytoplasma (strain AYWB).